We begin with the raw amino-acid sequence, 330 residues long: Probable L-asparaginase (330 aa).

An Asparaginase/glutaminase domain is found at 6–330; sequence PTIALLATGG…EKIQEMFEEY (325 aa). Thr-16 functions as the O-isoaspartyl threonine intermediate in the catalytic mechanism. Residues Ser-62 and 95 to 96 contribute to the substrate site; that span reads TD.

The protein belongs to the asparaginase 1 family.

It is found in the cytoplasm. It catalyses the reaction L-asparagine + H2O = L-aspartate + NH4(+). This chain is Probable L-asparaginase (ansA), found in Helicobacter pylori (strain ATCC 700392 / 26695) (Campylobacter pylori).